The following is a 412-amino-acid chain: Divalent metal cation transporter MntH (412 aa).

Transmembrane regions (helical) follow at residues 19–39 (FALM…GNFA), 46–66 (ASFG…AMLI), 94–114 (VWFY…AEFI), 122–142 (LILG…TFLI), 155–175 (LVIG…LVFS), 196–216 (AVFL…IYLH), 241–261 (IAMT…AAAF), 290–310 (IFGL…TLAG), 329–349 (SVTM…TRIL), 350–370 (VMSQ…LLIF), and 389–409 (IGWM…IGTL).

The protein belongs to the NRAMP family.

The protein resides in the cell inner membrane. H(+)-stimulated, divalent metal cation uptake system. This Enterobacter sp. (strain 638) protein is Divalent metal cation transporter MntH.